The chain runs to 291 residues: Proteasome subunit beta (291 aa).

The propeptide at 1 to 57 is removed in mature form; by autocatalysis; that stretch reads MTWPLPDRLSINSLSGTPAVDLSSFTDFLRRQAPELLPASISGGAPLAGGDAQLPHG. The active-site Nucleophile is the T58.

It belongs to the peptidase T1B family. As to quaternary structure, the 20S proteasome core is composed of 14 alpha and 14 beta subunits that assemble into four stacked heptameric rings, resulting in a barrel-shaped structure. The two inner rings, each composed of seven catalytic beta subunits, are sandwiched by two outer rings, each composed of seven alpha subunits. The catalytic chamber with the active sites is on the inside of the barrel. Has a gated structure, the ends of the cylinder being occluded by the N-termini of the alpha-subunits. Is capped by the proteasome-associated ATPase, ARC.

It localises to the cytoplasm. The catalysed reaction is Cleavage of peptide bonds with very broad specificity.. It participates in protein degradation; proteasomal Pup-dependent pathway. Its activity is regulated as follows. The formation of the proteasomal ATPase ARC-20S proteasome complex, likely via the docking of the C-termini of ARC into the intersubunit pockets in the alpha-rings, may trigger opening of the gate for substrate entry. Interconversion between the open-gate and close-gate conformations leads to a dynamic regulation of the 20S proteasome proteolysis activity. Its function is as follows. Component of the proteasome core, a large protease complex with broad specificity involved in protein degradation. This chain is Proteasome subunit beta, found in Mycobacterium tuberculosis (strain ATCC 25177 / H37Ra).